A 409-amino-acid polypeptide reads, in one-letter code: Protein naked cuticle homolog 2 (409 aa).

The N-myristoyl glycine moiety is linked to residue glycine 2. The EF-hand domain occupies 109–144 (AEDNRQEWVFTLYDFDNSGKVTKEDMSSLMHTIYDV). Aspartate 122, aspartate 124, serine 126, lysine 128, and aspartate 133 together coordinate Ca(2+). 4 disordered regions span residues 160–224 (LRVK…YCVD), 243–315 (TSRF…RYPG), 346–366 (SHTH…RIRS), and 388–409 (RHEH…YHQT). Composition is skewed to basic and acidic residues over residues 171–185 (AARR…RETS) and 193–224 (VRSE…YCVD). Over residues 247 to 268 (DSSSPDADQDPPSRSSHSQSRP) the composition is skewed to low complexity. The segment covering 389-409 (HEHHHHHEHHHHHHYHHYHQT) has biased composition (basic residues).

This sequence belongs to the NKD family. As to expression, expressed ubiquitously until 1 dpf, when expression becomes confined to the anterior CNS, with slight expression in the developing tail.

The protein resides in the cell membrane. It localises to the cytoplasm. Its function is as follows. Cell autonomous antagonist of both the canonical and non-canonical Wnt signaling pathways. This Danio rerio (Zebrafish) protein is Protein naked cuticle homolog 2 (nkd2).